The primary structure comprises 129 residues: Small ribosomal subunit protein uS11 (129 aa).

It belongs to the universal ribosomal protein uS11 family. As to quaternary structure, part of the 30S ribosomal subunit. Interacts with proteins S7 and S18. Binds to IF-3.

Its function is as follows. Located on the platform of the 30S subunit, it bridges several disparate RNA helices of the 16S rRNA. Forms part of the Shine-Dalgarno cleft in the 70S ribosome. This is Small ribosomal subunit protein uS11 from Jannaschia sp. (strain CCS1).